The following is a 396-amino-acid chain: 1-deoxy-D-xylulose 5-phosphate reductoisomerase (396 aa).

5 residues coordinate NADPH: threonine 10, glycine 11, serine 12, isoleucine 13, and asparagine 123. Residue lysine 124 coordinates 1-deoxy-D-xylulose 5-phosphate. An NADPH-binding site is contributed by glutamate 125. Residue aspartate 149 coordinates Mn(2+). Residues serine 150, glutamate 151, serine 185, and histidine 208 each contribute to the 1-deoxy-D-xylulose 5-phosphate site. A Mn(2+)-binding site is contributed by glutamate 151. Glycine 214 provides a ligand contact to NADPH. Positions 221, 226, 227, and 230 each coordinate 1-deoxy-D-xylulose 5-phosphate. Glutamate 230 contributes to the Mn(2+) binding site.

The protein belongs to the DXR family. Mg(2+) is required as a cofactor. Requires Mn(2+) as cofactor.

The enzyme catalyses 2-C-methyl-D-erythritol 4-phosphate + NADP(+) = 1-deoxy-D-xylulose 5-phosphate + NADPH + H(+). It functions in the pathway isoprenoid biosynthesis; isopentenyl diphosphate biosynthesis via DXP pathway; isopentenyl diphosphate from 1-deoxy-D-xylulose 5-phosphate: step 1/6. In terms of biological role, catalyzes the NADPH-dependent rearrangement and reduction of 1-deoxy-D-xylulose-5-phosphate (DXP) to 2-C-methyl-D-erythritol 4-phosphate (MEP). This chain is 1-deoxy-D-xylulose 5-phosphate reductoisomerase, found in Shewanella sp. (strain ANA-3).